A 123-amino-acid polypeptide reads, in one-letter code: MELARPCSNFQSDLDFCPDCGSVLPLPGVQDTVICPRCGFSIDVRDFGGKVVKTSVVFNKLGTVIPMSVDEGPESQGPVVDRRCSRCGHEGMAYYTRQMRSADEGQTVFYTCINCKFQEKEDS.

Residues cysteine 17, cysteine 20, cysteine 35, cysteine 38, cysteine 84, and cysteine 87 each contribute to the Zn(2+) site. A C4-type zinc finger spans residues 17 to 38 (CPDCGSVLPLPGVQDTVICPRC). The TFIIS-type zinc-finger motif lies at 80–120 (VDRRCSRCGHEGMAYYTRQMRSADEGQTVFYTCINCKFQEK). A Hairpin motif is present at residues 103 to 104 (DE). Zn(2+) is bound by residues cysteine 112 and cysteine 115.

The protein belongs to the archaeal RpoM/eukaryotic RPA12/RPB9/RPC11 RNA polymerase family. As to quaternary structure, component of the RNA polymerase I (Pol I) complex consisting of 13 subunits: a ten-subunit catalytic core composed of POLR1A/RPA1, POLR1B/RPA2, POLR1C/RPAC1, POLR1D/RPAC2, POLR1H/RPA12, POLR2E/RPABC1, POLR2F/RPABC2, POLR2H/RPABC3, POLR2K/RPABC4 and POLR2L/RPABC5; a mobile stalk subunit POLR1F/RPA43 protruding from the core and additional subunits homologous to general transcription factors POLR1E/RPA49 and POLR1G/RPA34. Part of Pol I pre-initiation complex (PIC), in which Pol I core assembles with RRN3 and promoter-bound UTBF and SL1/TIF-IB complex.

Its subcellular location is the nucleus. The protein resides in the nucleolus. Core component of RNA polymerase I (Pol I), a DNA-dependent RNA polymerase which synthesizes ribosomal RNA precursors using the four ribonucleoside triphosphates as substrates. Can mediate Pol I proofreading of the nascent RNA transcript. Anchors into the Pol I active site to monitor transcription fidelity and cleave mis-incorporated 5'-ribonucleotides. This Rattus norvegicus (Rat) protein is DNA-directed RNA polymerase I subunit RPA12.